The sequence spans 105 residues: Urease subunit gamma (105 aa).

The protein belongs to the urease gamma subunit family. In terms of assembly, heterotrimer of UreA (gamma), UreB (beta) and UreC (alpha) subunits. Three heterotrimers associate to form the active enzyme.

It is found in the cytoplasm. It catalyses the reaction urea + 2 H2O + H(+) = hydrogencarbonate + 2 NH4(+). It functions in the pathway nitrogen metabolism; urea degradation; CO(2) and NH(3) from urea (urease route): step 1/1. This Bacillus subtilis (strain 168) protein is Urease subunit gamma.